Here is a 504-residue protein sequence, read N- to C-terminus: Deoxyguanosinetriphosphate triphosphohydrolase (504 aa).

Residues 66–273 form the HD domain; the sequence is RLTHSLEVQQ…MEAADDISYC (208 aa).

Belongs to the dGTPase family. Type 1 subfamily. As to quaternary structure, homotetramer. Requires Mg(2+) as cofactor.

The catalysed reaction is dGTP + H2O = 2'-deoxyguanosine + triphosphate + H(+). Functionally, dGTPase preferentially hydrolyzes dGTP over the other canonical NTPs. In Klebsiella pneumoniae (strain 342), this protein is Deoxyguanosinetriphosphate triphosphohydrolase.